Here is a 414-residue protein sequence, read N- to C-terminus: Serine hydroxymethyltransferase (414 aa).

(6S)-5,6,7,8-tetrahydrofolate-binding positions include leucine 116 and 120-122 (GHL). Lysine 224 carries the N6-(pyridoxal phosphate)lysine modification. Residues glutamate 240 and 348–350 (SPF) each bind (6S)-5,6,7,8-tetrahydrofolate.

It belongs to the SHMT family. As to quaternary structure, homodimer. Requires pyridoxal 5'-phosphate as cofactor.

The protein resides in the cytoplasm. The enzyme catalyses (6R)-5,10-methylene-5,6,7,8-tetrahydrofolate + glycine + H2O = (6S)-5,6,7,8-tetrahydrofolate + L-serine. Its pathway is one-carbon metabolism; tetrahydrofolate interconversion. It functions in the pathway amino-acid biosynthesis; glycine biosynthesis; glycine from L-serine: step 1/1. Its function is as follows. Catalyzes the reversible interconversion of serine and glycine with tetrahydrofolate (THF) serving as the one-carbon carrier. This reaction serves as the major source of one-carbon groups required for the biosynthesis of purines, thymidylate, methionine, and other important biomolecules. Also exhibits THF-independent aldolase activity toward beta-hydroxyamino acids, producing glycine and aldehydes, via a retro-aldol mechanism. The polypeptide is Serine hydroxymethyltransferase (Campylobacter jejuni subsp. jejuni serotype O:23/36 (strain 81-176)).